The primary structure comprises 334 residues: Thiamine-binding periplasmic protein (334 aa).

A signal peptide spans Met-1–Ala-23. Thiamine is bound by residues Asp-64–Gly-65, Ala-166–Thr-167, Trp-202, and Tyr-220–Ser-223.

This sequence belongs to the bacterial solute-binding protein 1 family. In terms of assembly, the complex is composed of two ATP-binding proteins (ThiQ), two transmembrane proteins (ThiP) and a solute-binding protein (ThiB).

It is found in the periplasm. In terms of biological role, part of the ABC transporter complex ThiBPQ involved in thiamine import. This chain is Thiamine-binding periplasmic protein (thiB), found in Brucella suis biovar 1 (strain 1330).